A 758-amino-acid polypeptide reads, in one-letter code: 5-methyltetrahydropteroyltriglutamate--homocysteine methyltransferase (758 aa).

Residues 17–20 and lysine 117 each bind 5-methyltetrahydropteroyltri-L-glutamate; that span reads RELK. L-homocysteine is bound by residues 434 to 436 and glutamate 487; that span reads IGS. L-methionine contacts are provided by residues 434 to 436 and glutamate 487; that span reads IGS. 5-methyltetrahydropteroyltri-L-glutamate is bound by residues 518–519 and tryptophan 564; that span reads RC. L-homocysteine is bound at residue aspartate 602. Aspartate 602 provides a ligand contact to L-methionine. Residue glutamate 608 participates in 5-methyltetrahydropteroyltri-L-glutamate binding. 3 residues coordinate Zn(2+): histidine 644, cysteine 646, and glutamate 668. Histidine 697 serves as the catalytic Proton donor. Residue cysteine 729 coordinates Zn(2+).

It belongs to the vitamin-B12 independent methionine synthase family. Zn(2+) is required as a cofactor.

The catalysed reaction is 5-methyltetrahydropteroyltri-L-glutamate + L-homocysteine = tetrahydropteroyltri-L-glutamate + L-methionine. The protein operates within amino-acid biosynthesis; L-methionine biosynthesis via de novo pathway; L-methionine from L-homocysteine (MetE route): step 1/1. In terms of biological role, catalyzes the transfer of a methyl group from 5-methyltetrahydrofolate to homocysteine resulting in methionine formation. In Yersinia pestis bv. Antiqua (strain Antiqua), this protein is 5-methyltetrahydropteroyltriglutamate--homocysteine methyltransferase.